The sequence spans 264 residues: Endoglucanase S (264 aa).

Residues Met1–Ala32 form the signal peptide.

It belongs to the glycosyl hydrolase 12 (cellulase H) family.

It carries out the reaction Endohydrolysis of (1-&gt;4)-beta-D-glucosidic linkages in cellulose, lichenin and cereal beta-D-glucans.. The protein is Endoglucanase S (celS) of Pectobacterium parmentieri.